The primary structure comprises 174 residues: MNSTRCILALLLCLTQAMSGCYGQGSLIEEIENLKEYFNSSSLDVGKGGDLLFNILMSWQKDGDTKIIESQIVSFYFKLFEALKGNQAIQRSIDTIKADLFVKFFNSSMEKLNDFVKLTKIPVNDPQVQRKAVNELLSVMPHLSPKLSLRKRKRSRCCFGGGNRPVKNNLASTI.

Positions 1 to 23 are cleaved as a signal peptide; it reads MNSTRCILALLLCLTQAMSGCYG. A Pyrrolidone carboxylic acid modification is found at Gln-24. 2 N-linked (GlcNAc...) asparagine glycosylation sites follow: Asn-39 and Asn-106.

Belongs to the type II (or gamma) interferon family. As to quaternary structure, homodimer. Interacts with IFNGR1 (via extracellular domain); this interaction promotes IFNGR1 dimerization. Released primarily from activated T lymphocytes.

The protein resides in the secreted. Functionally, type II interferon produced by immune cells such as T-cells and NK cells that plays crucial roles in antimicrobial, antiviral, and antitumor responses by activating effector immune cells and enhancing antigen presentation. Primarily signals through the JAK-STAT pathway after interaction with its receptor IFNGR1 to affect gene regulation. Upon IFNG binding, IFNGR1 intracellular domain opens out to allow association of downstream signaling components JAK2, JAK1 and STAT1, leading to STAT1 activation, nuclear translocation and transcription of IFNG-regulated genes. Many of the induced genes are transcription factors such as IRF1 that are able to further drive regulation of a next wave of transcription. Plays a role in class I antigen presentation pathway by inducing a replacement of catalytic proteasome subunits with immunoproteasome subunits. In turn, increases the quantity, quality, and repertoire of peptides for class I MHC loading. Increases the efficiency of peptide generation also by inducing the expression of activator PA28 that associates with the proteasome and alters its proteolytic cleavage preference. Up-regulates as well MHC II complexes on the cell surface by promoting expression of several key molecules such as cathepsins B/CTSB, H/CTSH, and L/CTSL. Participates in the regulation of hematopoietic stem cells during development and under homeostatic conditions by affecting their development, quiescence, and differentiation. This is Interferon gamma (IFNG) from Phodopus sungorus (Striped hairy-footed hamster).